The chain runs to 393 residues: Decapping nuclease dom-3 (393 aa).

The interval 1–37 (MSHYGGNPRGNSSHQFGRKDFQQSDSKHIPKITGQPL) is disordered. Over residues 17-28 (GRKDFQQSDSKH) the composition is skewed to basic and acidic residues. Substrate contacts are provided by residues Arg74, Glu113, and 144–146 (WRG). The Mg(2+) site is built by Glu205, Glu257, Asp259, Glu269, and Leu270. Glu257 contributes to the substrate binding site. Positions 271 and 293 each coordinate substrate.

This sequence belongs to the DXO/Dom3Z family. Requires Mg(2+) as cofactor.

The catalysed reaction is a 5'-end NAD(+)-phospho-ribonucleoside in mRNA + H2O = a 5'-end phospho-ribonucleoside in mRNA + NAD(+) + H(+). It catalyses the reaction a 5'-end (N(7)-methyl 5'-triphosphoguanosine)-ribonucleoside-ribonucleotide in mRNA + H2O = a (N(7)-methyl 5'-triphosphoguanosine)-nucleoside + a 5'-end phospho-ribonucleoside in mRNA + H(+). It carries out the reaction a 5'-end triphospho-ribonucleoside in mRNA + H2O = a 5'-end phospho-ribonucleoside in mRNA + diphosphate + H(+). Functionally, decapping enzyme for NAD-capped RNAs: specifically hydrolyzes the nicotinamide adenine dinucleotide (NAD) cap from a subset of RNAs by removing the entire NAD moiety from the 5'-end of an NAD-capped RNA. The NAD-cap is present at the 5'-end of some RNAs and snoRNAs. In contrast to the canonical 5'-end N7 methylguanosine (m7G) cap, the NAD cap promotes mRNA decay. Also acts as a non-canonical decapping enzyme that removes the entire cap structure of m7G capped or incompletely capped RNAs and mediates their subsequent degradation. Specifically degrades pre-mRNAs with a defective 5'-end m7G cap and is part of a pre-mRNA capping quality control. Also possesses RNA 5'-pyrophosphohydrolase activity by hydrolyzing the 5'-end triphosphate to release pyrophosphates. This Caenorhabditis elegans protein is Decapping nuclease dom-3.